A 103-amino-acid chain; its full sequence is MERIRLRLKAYDHRVLDRSVASIVEAVKRTGSEIRGPVPLPTKKKRYTVLRSPHINKDSREQFEIRVHHRIIDIMSATPDTVDSLMKLDLAPEVDVEVMSMSK.

It belongs to the universal ribosomal protein uS10 family. As to quaternary structure, part of the 30S ribosomal subunit.

Functionally, involved in the binding of tRNA to the ribosomes. The polypeptide is Small ribosomal subunit protein uS10 (Helicobacter hepaticus (strain ATCC 51449 / 3B1)).